We begin with the raw amino-acid sequence, 334 residues long: Glutamyl-tRNA reductase (334 aa).

Substrate is bound by residues 49–52 (TCNR), Ser107, 112–114 (EDQ), and Gln118. Residue Cys50 is the Nucleophile of the active site. 186–191 (GNGEMG) lines the NADP(+) pocket.

Belongs to the glutamyl-tRNA reductase family. Homodimer.

The catalysed reaction is (S)-4-amino-5-oxopentanoate + tRNA(Glu) + NADP(+) = L-glutamyl-tRNA(Glu) + NADPH + H(+). It functions in the pathway porphyrin-containing compound metabolism; protoporphyrin-IX biosynthesis; 5-aminolevulinate from L-glutamyl-tRNA(Glu): step 1/2. Functionally, catalyzes the NADPH-dependent reduction of glutamyl-tRNA(Glu) to glutamate 1-semialdehyde (GSA). This Alkaliphilus oremlandii (strain OhILAs) (Clostridium oremlandii (strain OhILAs)) protein is Glutamyl-tRNA reductase.